The sequence spans 442 residues: Histidine--tRNA ligase (442 aa).

It belongs to the class-II aminoacyl-tRNA synthetase family. As to quaternary structure, homodimer.

It localises to the cytoplasm. It catalyses the reaction tRNA(His) + L-histidine + ATP = L-histidyl-tRNA(His) + AMP + diphosphate + H(+). This chain is Histidine--tRNA ligase, found in Helicobacter pylori (strain P12).